The following is a 186-amino-acid chain: Transcription factor FapR (186 aa).

The 71-residue stretch at 98–168 (FTKTQIARGH…YVIEVNSYVR (71 aa)) folds into the MaoC-like domain.

This sequence belongs to the FapR family.

Transcriptional factor involved in regulation of membrane lipid biosynthesis by repressing genes involved in fatty acid and phospholipid metabolism. The polypeptide is Transcription factor FapR (Staphylococcus haemolyticus (strain JCSC1435)).